A 157-amino-acid chain; its full sequence is 2-C-methyl-D-erythritol 2,4-cyclodiphosphate synthase (157 aa).

Residues Asp8 and His10 each contribute to the a divalent metal cation site. 4-CDP-2-C-methyl-D-erythritol 2-phosphate is bound by residues 8–10 and 34–35; these read DVH and HS. Residue His42 participates in a divalent metal cation binding. 4-CDP-2-C-methyl-D-erythritol 2-phosphate-binding positions include 56-58, 61-65, 100-106, 132-135, Phe139, and Arg142; these read DIG, FPDTD, AQAPKMA, and TTTE.

It belongs to the IspF family. In terms of assembly, homotrimer. A divalent metal cation serves as cofactor.

The enzyme catalyses 4-CDP-2-C-methyl-D-erythritol 2-phosphate = 2-C-methyl-D-erythritol 2,4-cyclic diphosphate + CMP. It functions in the pathway isoprenoid biosynthesis; isopentenyl diphosphate biosynthesis via DXP pathway; isopentenyl diphosphate from 1-deoxy-D-xylulose 5-phosphate: step 4/6. Functionally, involved in the biosynthesis of isopentenyl diphosphate (IPP) and dimethylallyl diphosphate (DMAPP), two major building blocks of isoprenoid compounds. Catalyzes the conversion of 4-diphosphocytidyl-2-C-methyl-D-erythritol 2-phosphate (CDP-ME2P) to 2-C-methyl-D-erythritol 2,4-cyclodiphosphate (ME-CPP) with a corresponding release of cytidine 5-monophosphate (CMP). The chain is 2-C-methyl-D-erythritol 2,4-cyclodiphosphate synthase from Pseudomonas paraeruginosa (strain DSM 24068 / PA7) (Pseudomonas aeruginosa (strain PA7)).